Consider the following 193-residue polypeptide: Pyridoxal 5'-phosphate synthase subunit PdxT (193 aa).

48 to 50 (GES) contributes to the L-glutamine binding site. The active-site Nucleophile is the Cys-80. L-glutamine is bound by residues Arg-112 and 140-141 (IR). Active-site charge relay system residues include His-176 and Glu-178.

It belongs to the glutaminase PdxT/SNO family. As to quaternary structure, in the presence of PdxS, forms a dodecamer of heterodimers. Only shows activity in the heterodimer.

It catalyses the reaction aldehydo-D-ribose 5-phosphate + D-glyceraldehyde 3-phosphate + L-glutamine = pyridoxal 5'-phosphate + L-glutamate + phosphate + 3 H2O + H(+). The enzyme catalyses L-glutamine + H2O = L-glutamate + NH4(+). Its pathway is cofactor biosynthesis; pyridoxal 5'-phosphate biosynthesis. Functionally, catalyzes the hydrolysis of glutamine to glutamate and ammonia as part of the biosynthesis of pyridoxal 5'-phosphate. The resulting ammonia molecule is channeled to the active site of PdxS. This chain is Pyridoxal 5'-phosphate synthase subunit PdxT, found in Mycolicibacterium smegmatis (strain ATCC 700084 / mc(2)155) (Mycobacterium smegmatis).